Here is a 201-residue protein sequence, read N- to C-terminus: 3-isopropylmalate dehydratase small subunit (201 aa).

It belongs to the LeuD family. LeuD type 1 subfamily. In terms of assembly, heterodimer of LeuC and LeuD.

The enzyme catalyses (2R,3S)-3-isopropylmalate = (2S)-2-isopropylmalate. Its pathway is amino-acid biosynthesis; L-leucine biosynthesis; L-leucine from 3-methyl-2-oxobutanoate: step 2/4. Catalyzes the isomerization between 2-isopropylmalate and 3-isopropylmalate, via the formation of 2-isopropylmaleate. The polypeptide is 3-isopropylmalate dehydratase small subunit (Shewanella woodyi (strain ATCC 51908 / MS32)).